The sequence spans 270 residues: Glucosamine-6-phosphate deaminase (270 aa).

Catalysis depends on Asp68, which acts as the Proton acceptor; for enolization step. The active-site For ring-opening step is the Asp145. Catalysis depends on His147, which acts as the Proton acceptor; for ring-opening step. Glu152 acts as the For ring-opening step in catalysis.

The protein belongs to the glucosamine/galactosamine-6-phosphate isomerase family. NagB subfamily.

The enzyme catalyses alpha-D-glucosamine 6-phosphate + H2O = beta-D-fructose 6-phosphate + NH4(+). It participates in amino-sugar metabolism; N-acetylneuraminate degradation; D-fructose 6-phosphate from N-acetylneuraminate: step 5/5. Catalyzes the reversible isomerization-deamination of glucosamine 6-phosphate (GlcN6P) to form fructose 6-phosphate (Fru6P) and ammonium ion. This is Glucosamine-6-phosphate deaminase from Bifidobacterium longum (strain NCC 2705).